The primary structure comprises 230 residues: Cytochrome c oxidase subunit 2 (230 aa).

Residues 1 to 14 are Mitochondrial intermembrane-facing; the sequence is MAHPSQLGFQDAAS. Residues 15–45 traverse the membrane as a helical segment; that stretch reads PVMEELLHFHDHALMIVLLISTLVLYIIVAM. Residues 46 to 59 lie on the Mitochondrial matrix side of the membrane; that stretch reads VSTKLTNMYILDSQ. The helical transmembrane segment at 60–87 threads the bilayer; it reads EIEIVWTVLPAVILILIALPSLRILYLM. At 88-230 the chain is on the mitochondrial intermembrane side; that stretch reads DEINDPHLTI…KWSTMMLEDA (143 aa). Residues His161, Cys196, Glu198, Cys200, His204, and Met207 each contribute to the Cu cation site. Glu198 is a binding site for Mg(2+).

This sequence belongs to the cytochrome c oxidase subunit 2 family. Component of the cytochrome c oxidase (complex IV, CIV), a multisubunit enzyme composed of 14 subunits. The complex is composed of a catalytic core of 3 subunits MT-CO1, MT-CO2 and MT-CO3, encoded in the mitochondrial DNA, and 11 supernumerary subunits COX4I, COX5A, COX5B, COX6A, COX6B, COX6C, COX7A, COX7B, COX7C, COX8 and NDUFA4, which are encoded in the nuclear genome. The complex exists as a monomer or a dimer and forms supercomplexes (SCs) in the inner mitochondrial membrane with NADH-ubiquinone oxidoreductase (complex I, CI) and ubiquinol-cytochrome c oxidoreductase (cytochrome b-c1 complex, complex III, CIII), resulting in different assemblies (supercomplex SCI(1)III(2)IV(1) and megacomplex MCI(2)III(2)IV(2)). Found in a complex with TMEM177, COA6, COX18, COX20, SCO1 and SCO2. Interacts with TMEM177 in a COX20-dependent manner. Interacts with COX20. Interacts with COX16. Cu cation is required as a cofactor.

It localises to the mitochondrion inner membrane. The catalysed reaction is 4 Fe(II)-[cytochrome c] + O2 + 8 H(+)(in) = 4 Fe(III)-[cytochrome c] + 2 H2O + 4 H(+)(out). Component of the cytochrome c oxidase, the last enzyme in the mitochondrial electron transport chain which drives oxidative phosphorylation. The respiratory chain contains 3 multisubunit complexes succinate dehydrogenase (complex II, CII), ubiquinol-cytochrome c oxidoreductase (cytochrome b-c1 complex, complex III, CIII) and cytochrome c oxidase (complex IV, CIV), that cooperate to transfer electrons derived from NADH and succinate to molecular oxygen, creating an electrochemical gradient over the inner membrane that drives transmembrane transport and the ATP synthase. Cytochrome c oxidase is the component of the respiratory chain that catalyzes the reduction of oxygen to water. Electrons originating from reduced cytochrome c in the intermembrane space (IMS) are transferred via the dinuclear copper A center (CU(A)) of subunit 2 and heme A of subunit 1 to the active site in subunit 1, a binuclear center (BNC) formed by heme A3 and copper B (CU(B)). The BNC reduces molecular oxygen to 2 water molecules using 4 electrons from cytochrome c in the IMS and 4 protons from the mitochondrial matrix. The protein is Cytochrome c oxidase subunit 2 (mt-co2) of Oncorhynchus mykiss (Rainbow trout).